A 245-amino-acid polypeptide reads, in one-letter code: Dehydrogenase/reductase SDR family member 6 (245 aa).

NAD(+)-binding positions include 16 to 18 (QGI), Asp37, and Asp58. Arg144 contacts substrate. Tyr147 serves as the catalytic Proton acceptor. Residues Lys151 and 180-184 (VDTPS) contribute to the NAD(+) site. The substrate site is built by Arg188 and Arg205.

The protein belongs to the short-chain dehydrogenases/reductases (SDR) family. Homotetramer.

Its subcellular location is the cytoplasm. It catalyses the reaction cis-4-hydroxy-L-proline + NAD(+) = 4-oxo-L-proline + NADH + H(+). The enzyme catalyses (R)-3-hydroxybutanoate + NAD(+) = acetoacetate + NADH + H(+). The protein operates within amino-acid metabolism. It functions in the pathway siderophore biosynthesis. Functionally, NAD(H)-dependent dehydrogenase/reductase with a preference for cyclic substrates. Catalyzes stereoselective conversion of 4-oxo-L-proline to cis-4-hydroxy-L-proline, likely a detoxification mechanism for ketoprolines. Mediates the formation of 2,5-dihydroxybenzoate (2,5-DHBA), a siderophore that chelates free cytoplasmic iron and associates with LCN2, thereby regulating iron transport and homeostasis while protecting cells against free radical-induced oxidative stress. The iron-siderophore complex is imported into mitochondria, providing an iron source for mitochondrial metabolic processes in particular heme synthesis. May act as a 3-hydroxybutyrate dehydrogenase. The protein is Dehydrogenase/reductase SDR family member 6 (BDH2) of Bos taurus (Bovine).